Here is a 216-residue protein sequence, read N- to C-terminus: MKPLFISATGTGVGKSYTTQKLLQSLHQSGRKPLALKPIETGANPTPEDALLHLQLMQKLQLDQGLSLEEICLERYKLPASPWVSAKKEGRCVDVDHLLRRLLEFQKRSDPLLIEGAGGLLVPLLKEYFMIDLAEALEAHMVLVISGKLGGINEALLSLEALQHRQMSYTLVLNLWEEEKRSFEEISAPYWKERPERLFRLDSELEELTQTLLSAI.

12–17 (GVGKSY) contributes to the ATP binding site. S16 contributes to the Mg(2+) binding site. K37 is an active-site residue. Residue T41 coordinates substrate. Mg(2+) is bound by residues H53 and E115. 115–118 (EGAG) is a binding site for ATP.

It belongs to the dethiobiotin synthetase family. In terms of assembly, homodimer. Requires Mg(2+) as cofactor.

It localises to the cytoplasm. The catalysed reaction is (7R,8S)-7,8-diammoniononanoate + CO2 + ATP = (4R,5S)-dethiobiotin + ADP + phosphate + 3 H(+). Its pathway is cofactor biosynthesis; biotin biosynthesis; biotin from 7,8-diaminononanoate: step 1/2. In terms of biological role, catalyzes a mechanistically unusual reaction, the ATP-dependent insertion of CO2 between the N7 and N8 nitrogen atoms of 7,8-diaminopelargonic acid (DAPA, also called 7,8-diammoniononanoate) to form a ureido ring. The polypeptide is ATP-dependent dethiobiotin synthetase BioD (Wolinella succinogenes (strain ATCC 29543 / DSM 1740 / CCUG 13145 / JCM 31913 / LMG 7466 / NCTC 11488 / FDC 602W) (Vibrio succinogenes)).